Reading from the N-terminus, the 648-residue chain is Threonine--tRNA ligase (648 aa).

Positions 1 to 61 (MIDIILPDGS…INTATVKAIT (61 aa)) constitute a TGS domain. Residues 243-549 (DHRKLGRELE…LIEHYSGKLP (307 aa)) form a catalytic region. Residues cysteine 349, histidine 400, and histidine 526 each coordinate Zn(2+).

The protein belongs to the class-II aminoacyl-tRNA synthetase family. Homodimer. Requires Zn(2+) as cofactor.

Its subcellular location is the cytoplasm. The catalysed reaction is tRNA(Thr) + L-threonine + ATP = L-threonyl-tRNA(Thr) + AMP + diphosphate + H(+). In terms of biological role, catalyzes the attachment of threonine to tRNA(Thr) in a two-step reaction: L-threonine is first activated by ATP to form Thr-AMP and then transferred to the acceptor end of tRNA(Thr). Also edits incorrectly charged L-seryl-tRNA(Thr). The chain is Threonine--tRNA ligase from Orientia tsutsugamushi (strain Ikeda) (Rickettsia tsutsugamushi).